The primary structure comprises 342 residues: Phomopsin biosynthesis cluster protein B' (342 aa).

The segment at 1 to 22 (MESIAKAKSLPNKGRTYDSQRP) is disordered. Residues 87–107 (VLIIGCAVISLFAIIGALGFA) traverse the membrane as a helical segment. The disordered stretch occupies residues 118–186 (CASPAHQNPH…QCGESPDEAQ (69 aa)). The segment covering 144-155 (HSGSHSSSSSTN) has biased composition (low complexity). N-linked (GlcNAc...) asparagine glycosylation is present at Asn248.

It localises to the membrane. In terms of biological role, part of the gene cluster that mediates the biosynthesis of the phomopsins, a group of hexapeptide mycotoxins which infects lupins and causes lupinosis disease in livestock. The role of phomB' within the phomopsins biosynthesis pathway has still to be determined. The pathway starts with the processing of the precursor phomA by several endopeptidases including kexin proteases as well as the cluster-specific S41 family peptidase phomP1 and the oligopeptidase phomG to produce 10 identical copies of the hexapeptide Tyr-Val-Ile-Pro-Ile-Asp. After being excised from the precursor peptide, the core peptides are cyclized and modified post-translationally by enzymes encoded within the gene cluster. The timing and order of proteolysis of the phomA precursor and PTMs are still unknown. Two tyrosinase-like enzymes, phomQ1 and phomQ2, catalyze the chlorination and hydroxylation of Tyr, respectively. PhomYb, is proposed to be involved in the construction of the macrocyclic structure. The other 4 ustYa family proteins may be involved in PTMs that generate the unique structure of phomopsin A. PhomYa is required for the hydroxylation of C-beta of Tyr. PhomYc, phomYd, and phomYe are responsible for the biosynthesis of 2,3-dehydroisoleucine (dIle), 2,3-dehydroaspartic acid (dAsp), and 3,4-dehydroproline (dPro), respectively. While dIle formation by phomYc is indispensable for the installation of dAsp by phomYd, the order of the other PTMs have not been elucidated yet. Most of the biosynthetic enzymes likely have broad substrate specificity, and thus, there might be a metabolic grid from a precursor to phomopsin A. The enzyme(s) responsible for the biosynthesis of 3,4-dehydrovaline (dVal) have also not been identified yet. Finally, phomM acts as an S-adenosylmethionine-dependent alpha-N-methyltransferase that catalyzes two successive N-methylation reactions, converting N-desmethyl-phomopsin A to phomopsin A and phomopsin A further to an N,N-dimethylated congener called phomopsin E. In Diaporthe leptostromiformis (Lupinosis disease fungus), this protein is Phomopsin biosynthesis cluster protein B'.